A 3603-amino-acid polypeptide reads, in one-letter code: Plipastatin synthase subunit D (3603 aa).

A condensation 1 region spans residues 7 to 306 (IQDIYPLSYM…NTMPVRVQGA (300 aa)). Residues 7-1043 (IQDIYPLSYM…ALIIREAEQN (1037 aa)) are domain 1 (proline-activating). Residues 490–889 (TYRELNKAAN…NHPDISEAAI (400 aa)) form an adenylation 1 region. A Carrier 1 domain is found at 966 to 1041 (APRNLLEAKL…GLALIIREAE (76 aa)). Ser1001 is modified (O-(pantetheine 4'-phosphoryl)serine). The tract at residues 1053 to 1334 (KRDTYPVSSA…NTLALRTRPA (282 aa)) is condensation 2. Residues 1053 to 2069 (KRDTYPVSSA…TVEGLATVIR (1017 aa)) form a domain 2 (glutamine-activating) region. Positions 1521 to 1924 (TYKELNEQAN…SIEGVREAAV (404 aa)) are adenylation 2. The Carrier 2 domain occupies 1997–2072 (APRNVTEMKL…GLATVIREGT (76 aa)). An O-(pantetheine 4'-phosphoryl)serine modification is found at Ser2032. A condensation 3 region spans residues 2084 to 2374 (KQETYPVSSA…NTLALRTRPE (291 aa)). Residues 2084 to 3596 (KQETYPVSSA…ELTEDALQEI (1513 aa)) are domain 3 (proline-activating). The adenylation 3 stretch occupies residues 2560–2956 (TYQELDEWSN…CIKGVKDAAV (397 aa)). Residues 3034 to 3108 (PPSSKMEQIL…ELAAYIRDSD (75 aa)) enclose the Carrier 3 domain. Ser3069 is subject to O-(pantetheine 4'-phosphoryl)serine. An epimerization region spans residues 3116-3596 (VEGDVQWSPV…ELTEDALQEI (481 aa)).

Belongs to the ATP-dependent AMP-binding enzyme family. Pantetheine 4'-phosphate is required as a cofactor.

Its function is as follows. This protein is a multifunctional enzyme, able to activate and polymerize the amino acids Pro, Gln and Tyr as part of the biosynthesis of the lipopeptide antibiotic plipastatin. The Tyr residue is further epimerized to the D-isomer form. The activation sites for these amino acids consist of individual domains. This chain is Plipastatin synthase subunit D (ppsD), found in Bacillus subtilis (strain 168).